A 326-amino-acid polypeptide reads, in one-letter code: Microtubule-associated protein RP/EB family member 2 (326 aa).

S9 is modified (phosphoserine). The 103-residue stretch at 56–158 folds into the Calponin-homology (CH) domain; the sequence is TMSRHDIIAW…FIQWFKKFYD (103 aa). Y166 bears the Phosphotyrosine mark. 2 disordered regions span residues 170 to 239 and 298 to 326; these read EARQ…DKDL and ASDE…QEEY. Positions 186-326 are DCTN1-binding; the sequence is QIFNLPKKSH…EQQPQQQEEY (141 aa). Over residues 199 to 233 the composition is skewed to low complexity; that stretch reads SPTAGAAKSSPASKPGSTPSRPSSAKRASSSGSAS. Phosphoserine is present on residues S218 and S235. The EB1 C-terminal domain occupies 235–305; that stretch reads SDKDLETQVI…LYASDEHEGH (71 aa). Positions 258–301 are APC-binding; it reads EGVEKERDFYFGKLREIELLCQEHGQENDDLVQRLMDVLYASDE. The span at 299–316 shows a compositional bias: basic and acidic residues; sequence SDEHEGHPEEPEAEEQVH. Low complexity predominate over residues 317-326; the sequence is EQQPQQQEEY.

The protein belongs to the MAPRE family. Interacts with DCTN1. Interacts with APC (via C-terminal). Interacts with monomeric and polymerized tubulin. Interacts with SLAIN1. Interacts (via the N-terminal region) with BAG1. Interacts with ASB14. Interacts with HAX1; this interaction is essential for epidermal cell migration. Post-translationally, phosphorylated at Ser-235 by CK2 leading to enhanced cell adhesion. Phosphorylated by CDK1 and AURKB during mitosis reduces the binding affinity of MAPRE2 for microtubules. Ubiquitinated in an ASB14-dependent manner; leading to proteasomal degradation.

The protein localises to the cytoplasm. It localises to the cytoskeleton. Adapter protein that is involved in microtubule polymerization, and spindle function by stabilizing microtubules and anchoring them at centrosomes. Therefore, ensures mitotic progression and genome stability. Acts as a central regulator of microtubule reorganization in apico-basal epithelial differentiation. Plays a role during oocyte meiosis by regulating microtubule dynamics. Participates in neurite growth by interacting with plexin B3/PLXNB3 and microtubule reorganization during apico-basal epithelial differentiation. Also plays an essential role for cell migration and focal adhesion dynamics. Mechanistically, recruits HAX1 to microtubules in order to regulate focal adhesion dynamics. The protein is Microtubule-associated protein RP/EB family member 2 (MAPRE2) of Bos taurus (Bovine).